A 108-amino-acid chain; its full sequence is Trp operon repressor homolog (108 aa).

Residues 59 to 82 mediate DNA binding; that stretch reads QRQISQLLGVGVATITRGSNELKS.

Belongs to the TrpR family. Homodimer.

The protein localises to the cytoplasm. Functionally, this protein is an aporepressor. When complexed with L-tryptophan it binds the operator region of the trp operon and prevents the initiation of transcription. This Aliivibrio fischeri (strain MJ11) (Vibrio fischeri) protein is Trp operon repressor homolog.